A 156-amino-acid polypeptide reads, in one-letter code: Ribosome maturation factor RimP (156 aa).

Belongs to the RimP family.

The protein localises to the cytoplasm. Its function is as follows. Required for maturation of 30S ribosomal subunits. This chain is Ribosome maturation factor RimP, found in Prochlorococcus marinus (strain NATL2A).